A 234-amino-acid polypeptide reads, in one-letter code: Ribulose-phosphate 3-epimerase (234 aa).

Serine 7 contributes to the substrate binding site. 3 residues coordinate a divalent metal cation: histidine 32, aspartate 34, and histidine 65. Aspartate 34 (proton acceptor) is an active-site residue. Substrate-binding positions include histidine 65, 139–142 (GFSG), 172–174 (DGG), and 194–195 (AS). Aspartate 172 serves as a coordination point for a divalent metal cation. Aspartate 172 functions as the Proton donor in the catalytic mechanism.

The protein belongs to the ribulose-phosphate 3-epimerase family. Requires a divalent metal cation as cofactor.

The catalysed reaction is D-ribulose 5-phosphate = D-xylulose 5-phosphate. The protein operates within carbohydrate degradation. Functionally, catalyzes the reversible epimerization of D-ribulose 5-phosphate to D-xylulose 5-phosphate. This Methanocaldococcus jannaschii (strain ATCC 43067 / DSM 2661 / JAL-1 / JCM 10045 / NBRC 100440) (Methanococcus jannaschii) protein is Ribulose-phosphate 3-epimerase.